A 478-amino-acid polypeptide reads, in one-letter code: Lactate utilization protein B (478 aa).

4Fe-4S ferredoxin-type domains lie at Gly-303–Tyr-333 and Tyr-352–Gln-381. Positions 312, 315, 318, 322, 365, 368, and 372 each coordinate [4Fe-4S] cluster.

The protein belongs to the LutB/YkgF family.

In terms of biological role, is involved in L-lactate degradation and allows cells to grow with lactate as the sole carbon source. Has probably a role as an electron transporter during oxidation of L-lactate. In Oceanobacillus iheyensis (strain DSM 14371 / CIP 107618 / JCM 11309 / KCTC 3954 / HTE831), this protein is Lactate utilization protein B.